The following is a 191-amino-acid chain: ATP synthase subunit b (191 aa).

Residues 10–30 (FLVPGPTAIAELIVFLLILFI) form a helical membrane-spanning segment. The interval 170–191 (RAQRQPAASDVVGGQQREEVHR) is disordered.

Belongs to the ATPase B chain family. In terms of assembly, F-type ATPases have 2 components, F(1) - the catalytic core - and F(0) - the membrane proton channel. F(1) has five subunits: alpha(3), beta(3), gamma(1), delta(1), epsilon(1). F(0) has three main subunits: a(1), b(2) and c(10-14). The alpha and beta chains form an alternating ring which encloses part of the gamma chain. F(1) is attached to F(0) by a central stalk formed by the gamma and epsilon chains, while a peripheral stalk is formed by the delta and b chains.

Its subcellular location is the cell membrane. Functionally, f(1)F(0) ATP synthase produces ATP from ADP in the presence of a proton or sodium gradient. F-type ATPases consist of two structural domains, F(1) containing the extramembraneous catalytic core and F(0) containing the membrane proton channel, linked together by a central stalk and a peripheral stalk. During catalysis, ATP synthesis in the catalytic domain of F(1) is coupled via a rotary mechanism of the central stalk subunits to proton translocation. Its function is as follows. Component of the F(0) channel, it forms part of the peripheral stalk, linking F(1) to F(0). This Acidothermus cellulolyticus (strain ATCC 43068 / DSM 8971 / 11B) protein is ATP synthase subunit b.